Reading from the N-terminus, the 81-residue chain is ATP synthase subunit c (81 aa).

A run of 2 helical transmembrane segments spans residues 5 to 25 (IAAG…IGAG) and 57 to 77 (VGLV…FVFA).

It belongs to the ATPase C chain family. In terms of assembly, F-type ATPases have 2 components, F(1) - the catalytic core - and F(0) - the membrane proton channel. F(1) has five subunits: alpha(3), beta(3), gamma(1), delta(1), epsilon(1). F(0) has three main subunits: a(1), b(2) and c(10-14). The alpha and beta chains form an alternating ring which encloses part of the gamma chain. F(1) is attached to F(0) by a central stalk formed by the gamma and epsilon chains, while a peripheral stalk is formed by the delta and b chains.

The protein localises to the cell membrane. Functionally, f(1)F(0) ATP synthase produces ATP from ADP in the presence of a proton or sodium gradient. F-type ATPases consist of two structural domains, F(1) containing the extramembraneous catalytic core and F(0) containing the membrane proton channel, linked together by a central stalk and a peripheral stalk. During catalysis, ATP synthesis in the catalytic domain of F(1) is coupled via a rotary mechanism of the central stalk subunits to proton translocation. Key component of the F(0) channel; it plays a direct role in translocation across the membrane. A homomeric c-ring of between 10-14 subunits forms the central stalk rotor element with the F(1) delta and epsilon subunits. In Mycolicibacterium gilvum (strain PYR-GCK) (Mycobacterium gilvum (strain PYR-GCK)), this protein is ATP synthase subunit c.